The chain runs to 884 residues: E3 ubiquitin-protein ligase BRE1-like 1 (884 aa).

The segment at 1 to 37 is disordered; that stretch reads MGSTGEPDRKRRLSSSVAPGGGAPVSPAKRLAVAPTS. A coiled-coil region spans residues 49–86; sequence YKNQKLSEQLEAHKFEYRALENKFAGLKEKQRTHNETL. The disordered stretch occupies residues 107-127; sequence KSGSPNSSPGSGHNNVQKDGT. Residues 108–121 are compositionally biased toward low complexity; that stretch reads SGSPNSSPGSGHNN. 4 coiled-coil regions span residues 216 to 541, 580 to 663, 696 to 762, and 789 to 827; these read LNNV…ELKL, SKLE…LQQI, RNLQ…QSLD, and KKRI…KEYR. The RING-type zinc finger occupies 832–871; that stretch reads CGICHDRQKEVVITKCYHLFCNQCIQKSLGNRQRRCPSCS.

The protein belongs to the BRE1 family.

It localises to the nucleus. The catalysed reaction is S-ubiquitinyl-[E2 ubiquitin-conjugating enzyme]-L-cysteine + [acceptor protein]-L-lysine = [E2 ubiquitin-conjugating enzyme]-L-cysteine + N(6)-ubiquitinyl-[acceptor protein]-L-lysine.. It functions in the pathway protein modification; protein ubiquitination. In terms of biological role, E3 ubiquitin-protein ligase that monoubiquitinates H2B to form H2BK143ub1. H2BK143ub1 gives a specific tag for epigenetic transcriptional activation and is also prerequisite for H3K4me and maybe H3K79me. It thereby plays a central role in histone code and gene regulation. Forms a ubiquitin ligase complex in cooperation with the E2 enzyme UBC2/RAD6. This chain is E3 ubiquitin-protein ligase BRE1-like 1 (BRE1A), found in Oryza sativa subsp. indica (Rice).